Reading from the N-terminus, the 363-residue chain is Mitochondrial phosphate carrier protein 2, mitochondrial (363 aa).

Residues 65–85 (AYFAACTVAGMLSCGITHTAI) form a helical membrane-spanning segment. Solcar repeat units lie at residues 65 to 149 (AYFA…AKKY), 162 to 246 (YKTL…TVEL), and 263 to 342 (VQLG…VKVL). Topologically, residues 86–123 (TPLDVIKCNMQIDPLKYKNITSAFKTTIKEQGLKGFTR) are mitochondrial matrix. A helical membrane pass occupies residues 124-143 (GWSPTLLGYSAQGAFKYGLY). Over 144 to 164 (EYAKKYYSDIVGPEYAAKYKT) the chain is Mitochondrial intermembrane. A helical membrane pass occupies residues 165-185 (LIYLAGSASAEIVADVALCPM). The Mitochondrial matrix portion of the chain corresponds to 186–220 (EAVKVRVQTQPGFARGLSDGLPKIIKSEGFRGLHK). A helical transmembrane segment spans residues 221–240 (GLVPLWGRQIPYTMMKFATF). At 241–261 (ENTVELIYKKVMPTPKEECSK) the chain is on the mitochondrial intermembrane side. Residues 262–282 (PVQLGVSFAGGYIAGIFCAII) traverse the membrane as a helical segment. The Mitochondrial matrix portion of the chain corresponds to 283-321 (SHPADNLVSFLNNSKGATVADAVKRLGLWGMLTRGLPLR). The helical transmembrane segment at 322–342 (IFMIGTLTGAQWVIYDAVKVL) threads the bilayer. Residues 343–363 (AGLPTTGGASPATALAPSVSA) lie on the Mitochondrial intermembrane side of the membrane.

The protein belongs to the mitochondrial carrier (TC 2.A.29) family. Expressed in leaves. Strong expression in senescent leaves.

The protein localises to the mitochondrion inner membrane. Transport of phosphate groups from the cytosol to the mitochondrial matrix. Mediates salt stress tolerance through an ATP-dependent pathway and via modulation of the gibberellin metabolism. The sequence is that of Mitochondrial phosphate carrier protein 2, mitochondrial (MPT2) from Arabidopsis thaliana (Mouse-ear cress).